The chain runs to 393 residues: MGGAAARLGAVILFVVIVGLHGVRGKYALADASLKMADPNRFRGKDLPVLDQLTDPPGVRRVYHIQAGLPNPFQPPSLPITVYRRVERACRSVLLNAPSEAPQIVRGASEDVRKQPYNLTIAWFRMGGNCAIPITVMEYTECSYNKSLGACPIRTQPRWNYYDSFSAVSEDNLGFLMHAPAFETAGTYLRLVKINDWTEITQFILEHRAKGSCKYTLPLRIPPSACLSPQAYQQGVTVDSIGMLPRFIPENQRTVAVYSLKIAGWHGPRAPYTSTLLPPELPETPNATQPELAPEDPEDSALLEDPVGTVAPQIPPNWHIPSIQDAATPYHPPATPNNMGLIAGAVGGSLLAALVICGIVYWMRRRTRKAPKRIRLPHIREDDQPSSHQPLFY.

The first 25 residues, 1 to 25 (MGGAAARLGAVILFVVIVGLHGVRG), serve as a signal peptide directing secretion. Positions 25–57 (GKYALADASLKMADPNRFRGKDLPVLDQLTDPP) are interaction with TNFRSF14. Topologically, residues 26 to 338 (KYALADASLK…PYHPPATPNN (313 aa)) are virion surface. H64 provides a ligand contact to Zn(2+). Disulfide bonds link C90–C213, C130–C226, and C142–C151. 2 N-linked (GlcNAc...) asparagine; by host glycosylation sites follow: N118 and N145. D239 lines the Zn(2+) pocket. A profusion region spans residues 260–304 (LKIAGWHGPRAPYTSTLLPPELPETPNATQPELAPEDPEDSALLE). Positions 273-300 (TSTLLPPELPETPNATQPELAPEDPEDS) are disordered. N-linked (GlcNAc...) asparagine; by host glycosylation is present at N286. The helical transmembrane segment at 339–363 (MGLIAGAVGGSLLAALVICGIVYWM) threads the bilayer. Topologically, residues 364 to 393 (RRRTRKAPKRIRLPHIREDDQPSSHQPLFY) are intravirion.

Belongs to the herpesviridae glycoprotein D family. Homodimer. Interacts with host receptor TNFRSF14. Interacts with host receptor NECTIN1. Interacts (via profusion domain) with gB; this interaction occurs in the absence of gH/gL. Interacts (via profusion domain) with gH/gL heterodimer; this interaction occurs in the absence of gB. Associates with the gB-gH/gL-gD complex. Interacts (via C-terminus) with UL11 tegument protein. Interacts with host RSAD2.

Its subcellular location is the virion membrane. The protein resides in the host Golgi apparatus. Envelope glycoprotein that binds to the host cell entry receptors NECTIN1, TNFRSF14/HVEM and 3-O-sulfated heparan sulfate, promoting the virus entry into host cells. May trigger fusion with host membrane, by recruiting the fusion machinery composed of gB and gH/gL. The polypeptide is Envelope glycoprotein D (gD) (Homo sapiens (Human)).